The sequence spans 378 residues: 4-hydroxy-3-methylbut-2-en-1-yl diphosphate synthase (flavodoxin) (378 aa).

The [4Fe-4S] cluster site is built by Cys268, Cys271, Cys303, and Glu310. A disordered region spans residues 359-378; it reads AEREKEKEKEKEKEKETQEQ.

Belongs to the IspG family. It depends on [4Fe-4S] cluster as a cofactor.

The catalysed reaction is (2E)-4-hydroxy-3-methylbut-2-enyl diphosphate + oxidized [flavodoxin] + H2O + 2 H(+) = 2-C-methyl-D-erythritol 2,4-cyclic diphosphate + reduced [flavodoxin]. Its pathway is isoprenoid biosynthesis; isopentenyl diphosphate biosynthesis via DXP pathway; isopentenyl diphosphate from 1-deoxy-D-xylulose 5-phosphate: step 5/6. Converts 2C-methyl-D-erythritol 2,4-cyclodiphosphate (ME-2,4cPP) into 1-hydroxy-2-methyl-2-(E)-butenyl 4-diphosphate. In Bacillus cereus (strain ZK / E33L), this protein is 4-hydroxy-3-methylbut-2-en-1-yl diphosphate synthase (flavodoxin).